Reading from the N-terminus, the 344-residue chain is N-acetyl-gamma-glutamyl-phosphate reductase (344 aa).

Residue cysteine 149 is part of the active site.

This sequence belongs to the NAGSA dehydrogenase family. Type 1 subfamily.

It localises to the cytoplasm. It catalyses the reaction N-acetyl-L-glutamate 5-semialdehyde + phosphate + NADP(+) = N-acetyl-L-glutamyl 5-phosphate + NADPH + H(+). It functions in the pathway amino-acid biosynthesis; L-arginine biosynthesis; N(2)-acetyl-L-ornithine from L-glutamate: step 3/4. Its function is as follows. Catalyzes the NADPH-dependent reduction of N-acetyl-5-glutamyl phosphate to yield N-acetyl-L-glutamate 5-semialdehyde. The polypeptide is N-acetyl-gamma-glutamyl-phosphate reductase (Syntrophobacter fumaroxidans (strain DSM 10017 / MPOB)).